A 211-amino-acid chain; its full sequence is Metalloproteinase inhibitor 3 (211 aa).

Residues 1–23 (MTPWLGLVVLLGSWSLGDWGAEA) form the signal peptide. Zn(2+) is bound at residue Cys24. Involved in metalloproteinase-binding regions lie at residues 24–27 (CTCS) and 88–89 (ES). Disulfide bonds link Cys24–Cys91, Cys26–Cys118, Cys36–Cys143, Cys145–Cys192, Cys150–Cys155, and Cys163–Cys184. The region spanning 24–143 (CTCSPSHPQD…GLNYRYHLGC (120 aa)) is the NTR domain. The mediates interaction with EFEMP1 stretch occupies residues 105 to 188 (TGRVYDGKMY…SKHYACIRQK (84 aa)). The N-linked (GlcNAc...) asparagine glycan is linked to Asn207.

Belongs to the protease inhibitor I35 (TIMP) family. Interacts with EFEMP1. Interacts with KDR.

The protein localises to the secreted. Its subcellular location is the extracellular space. It is found in the extracellular matrix. In terms of biological role, mediates a variety of processes including matrix regulation and turnover, inflammation, and angiogenesis, through reversible inhibition of zinc protease superfamily enzymes, primarily matrix metalloproteinases (MMPs). Regulates extracellular matrix (ECM) remodeling through inhibition of matrix metalloproteinases (MMP) including MMP-1, MMP-2, MMP-3, MMP-7, MMP-9, MMP-13, MMP-14 and MMP-15. Additionally, modulates the processing of amyloid precursor protein (APP) and apolipoprotein E receptor ApoER2 by inhibiting two alpha-secretases ADAM10 and ADAM17. Functions as a tumor suppressor and a potent inhibitor of angiogenesis. Exerts its anti-angiogenic effect by directly interacting with vascular endothelial growth factor (VEGF) receptor-2/KDR, preventing its binding to the VEGFA ligand. Selectively induces apoptosis in angiogenic endothelial cells through a caspase-independent cell death pathway. Mechanistically, inhibits matrix-induced focal adhesion kinase PTK2 tyrosine phosphorylation and association with paxillin/PXN and disrupts the incorporation of ITGB3, PTK2 and PXN into focal adhesion contacts on the matrix. This is Metalloproteinase inhibitor 3 (TIMP3) from Equus caballus (Horse).